A 140-amino-acid chain; its full sequence is uncharacterized protein (140 aa).

Helical transmembrane passes span Leu-63–Thr-83 and Ile-119–Asn-139.

The protein localises to the membrane. This is an uncharacterized protein from Schizosaccharomyces pombe (strain 972 / ATCC 24843) (Fission yeast).